Reading from the N-terminus, the 398-residue chain is ATP-dependent RNA helicase eIF4A (398 aa).

A Q motif motif is present at residues 25–53 (DSFDAMNLRAELLRGVYAYGFERPSAIQQ). The Helicase ATP-binding domain maps to 56-226 (IMPVIKGSDV…TKFMRDPVRI (171 aa)). 69 to 76 (AQSGTGKT) contacts ATP. A DEAD box motif is present at residues 174–177 (DEAD). Residues 237-398 (GIKQFYIAVE…EMPMNVADLI (162 aa)) form the Helicase C-terminal domain.

This sequence belongs to the DEAD box helicase family. eIF4A subfamily. As to quaternary structure, component of the eIF4F complex, which composition varies with external and internal environmental conditions. It is composed of at least eIF4A, eIF4E and eIF4G.

It localises to the cytoplasm. The enzyme catalyses ATP + H2O = ADP + phosphate + H(+). Functionally, ATP-dependent RNA helicase which is a subunit of the eIF4F complex involved in cap recognition and is required for mRNA binding to ribosome. In the current model of translation initiation, eIF4A unwinds RNA secondary structures in the 5'-UTR of mRNAs which is necessary to allow efficient binding of the small ribosomal subunit, and subsequent scanning for the initiator codon. The polypeptide is ATP-dependent RNA helicase eIF4A (TIF1) (Coccidioides immitis (strain RS) (Valley fever fungus)).